A 347-amino-acid chain; its full sequence is Sensor protein VraS (347 aa).

Transmembrane regions (helical) follow at residues 13–33 and 43–63; these read ILVY…VNII and IFGI…CIIV. One can recognise a Histidine kinase domain in the interval 150–341; that stretch reads RLARELHDSV…RIEVKAPLNK (192 aa). Residue H156 is modified to Phosphohistidine.

In terms of processing, autophosphorylated on His-156.

The protein localises to the cell membrane. The enzyme catalyses ATP + protein L-histidine = ADP + protein N-phospho-L-histidine.. In terms of biological role, member of the two-component regulatory system PprA/PprB involved in biofilm formation by controlling the expression of many related genes including type IVb pili major subunit flp pilin, adhesin bapA or cupE fimbriae. Also modulates quorum-sensing signal production acting on both negative and positive modulators. Functions as a heme sensor histidine kinase which is autophosphorylated at a histidine residue and transfers its phosphate group to PprB. This is Sensor protein VraS (vraS) from Staphylococcus aureus (strain COL).